The sequence spans 296 residues: Arginase (296 aa).

Mn(2+)-binding residues include His98, Asp124, His126, and Asp128. Residues Asn130, Ser137, and Asp178 each coordinate L-arginine. Asp225 and Asp227 together coordinate Mn(2+). L-arginine is bound by residues Asp227 and Thr239.

This sequence belongs to the arginase family. In terms of assembly, monomer. Homodimer; dimerization is dispensable for catalytic activity. It depends on Mn(2+) as a cofactor.

It catalyses the reaction L-arginine + H2O = urea + L-ornithine. Its pathway is nitrogen metabolism; urea cycle; L-ornithine and urea from L-arginine: step 1/1. With respect to regulation, substitution of the loosely bound surface exposed Mn(2+) with Mg(2+), Zn(2+), Ni(2+) or Co(2+) results in similar catalytic activity, substitution with Cd(2+) and Cu(2+) reduces catalytic activity and substitution with Hg(2+) and Ca(2+) inhibits the enzyme. Inhibited by L-norvaline. Catalyzes the hydrolysis of L-arginine into urea and L-ornithine, which is a precursor for polyamine biosynthesis. By depleting host L-arginine, a substrate for nitric oxide synthase (NOS), prevents the production of nitric oxide (NO) by host activated macrophages, and thus allows the parasite to evade host immune response. The sequence is that of Arginase from Entamoeba histolytica (strain ATCC 30459 / HM-1:IMSS / ABRM).